The sequence spans 875 residues: MTGKEIRARFLKFFADRGHAVVPSSPLIPHNDPTLLFANAGMNQFKDCFLGLEKRDYVRACSSQKCVRAGGKHNDLENVGRTARHHTFFEMLGNFSFGDYFKKEAIAFAWEFLTKDLGLDKDRLYVTVYTDDDEAADIWHLQEGVPRERIYRFGEKDNFWAMGDTGPCGPCSEIFWDNGPEVGCGSPDCAVGCDCDRYMEIWNNVFMQFNRSADGVLTPLPKPSVDTGMGLERISTVMQGVKSNYDTDLFQGIIGHVEKLSGKRYRHSEKDDVSMRVMADHVRATTFLICDGVLPSNEGRGYVLRRIMRRAARHAKMLGFAEPVICRMVEAVNAMMGDAYPELLEREEYIRKVIRAEEERFAETLDRGLAILNEAVADLKNEGRTVIPGETLFRLYDTFGFPTDLTADIVRSEGFTIDEDGFEACMERQREQAREHWKGSGEEGIAEVHKTLHSRGVRSRFTGYEARTAYSPVTVLLKGGAEVAEATAGDRVEIITDATPFYGESGGQVGDTGTISTGSAHVEVTETLRPFPDLIVHRGTVVEGTIRQGDACDLKVAPGRDATARNHTATHLLQSALRQVLGDHVKQSGSLVGPDRLRFDFTHFAAMTPEEIRRVEEIVNSCIMANDDVHAREMALDEAMEIGATALFGEKYGDTVRVVRVGEVSMELCGGTHVHAAGDIGFFKILSEAGIAAGVRRIEALTGMGALRHVQQLEDERKEIAALIKAEGGDNVERLQRLLTRQKDMQREIETLESRLNAARSADLLADVREVNGVKVLATLAEVDDPKKLRELADTLKDRLGSGVVALGCVKEGKANLLVAVTKDLTGRVKAGDLIRQLSPIIGGSGGGKPELAQAGGTLPDKLGEALGKVCELVP.

Histidine 567, histidine 571, cysteine 669, and histidine 673 together coordinate Zn(2+).

It belongs to the class-II aminoacyl-tRNA synthetase family. Zn(2+) is required as a cofactor.

It localises to the cytoplasm. It catalyses the reaction tRNA(Ala) + L-alanine + ATP = L-alanyl-tRNA(Ala) + AMP + diphosphate. Functionally, catalyzes the attachment of alanine to tRNA(Ala) in a two-step reaction: alanine is first activated by ATP to form Ala-AMP and then transferred to the acceptor end of tRNA(Ala). Also edits incorrectly charged Ser-tRNA(Ala) and Gly-tRNA(Ala) via its editing domain. The protein is Alanine--tRNA ligase of Geobacter sulfurreducens (strain ATCC 51573 / DSM 12127 / PCA).